A 139-amino-acid polypeptide reads, in one-letter code: Acyl carrier protein 5, chloroplastic (139 aa).

The N-terminal 54 residues, 1 to 54 (MATSFCSSISMQAPFSATTTRFCLNKQATIFNNEKTNNLSFSLRRLMPARLAVS), are a transit peptide targeting the chloroplast. In terms of domain architecture, Carrier spans 59–134 (QETVEKVSEI…QAAELIEELV (76 aa)). Ser-94 is modified (O-(pantetheine 4'-phosphoryl)serine).

The protein belongs to the acyl carrier protein (ACP) family. In terms of processing, 4'-phosphopantetheine is transferred from CoA to a specific serine of apo-ACP by acpS. This modification is essential for activity because fatty acids are bound in thioester linkage to the sulfhydryl of the prosthetic group.

It is found in the plastid. The protein resides in the chloroplast. Carrier of the growing fatty acid chain in fatty acid biosynthesis. The polypeptide is Acyl carrier protein 5, chloroplastic (ACP5) (Arabidopsis thaliana (Mouse-ear cress)).